The chain runs to 163 residues: Nucleotide-binding protein GK0742 (163 aa).

The protein belongs to the YajQ family.

Its function is as follows. Nucleotide-binding protein. The protein is Nucleotide-binding protein GK0742 of Geobacillus kaustophilus (strain HTA426).